We begin with the raw amino-acid sequence, 485 residues long: MQFRSIIRIVGLLLALFSVTMLAPALVALLYRDGAGVPFVTTFFVLLFCGAMCWFPNRRHKHELKSRDGFLIVVLFWTVLGSAGSLPFLIADNPNISVTDAFFESFSALTTTGATVIVGLDELPKAILFYRQFLQWFGGMGIIVLAVAILPVLGIGGMQLYRAEIPGPVKDTKMTPRIAETAKALWYIYLSLTIACAVAFWLAGMTPFDAISHSFSTIAIGGFSTHDASMGYFDSYAINLITVVFLLISACNFTLHFAAFASGGVHPKYYWKDPEFRAFIFIQVLLFLVCFLLLLKHHSYTSPYDAFDQALFQTVSISTTAGFTTTGFADWPLFLPVLLLFSSFIGGCAGSTGGGMKVIRILLLTLQGARELKRLVHPRAVYTIKVGGSALPQRVVDAVWGFFSAYALVFVVCMLGLIATGMDELSAFSAVAATLNNLGPGLGEVALHFGDVNDKAKWVLIVSMLFGRLEIFTLLILLTPTFWRS.

The Cytoplasmic segment spans residues 1–2 (MQ). Residues 3–29 (FRSIIRIVGLLLALFSVTMLAPALVAL) traverse the membrane as a helical segment. The Periplasmic segment spans residues 30-35 (LYRDGA). The helical transmembrane segment at 36-57 (GVPFVTTFFVLLFCGAMCWFPN) threads the bilayer. At 58-65 (RRHKHELK) the chain is on the cytoplasmic side. Residues 66-90 (SRDGFLIVVLFWTVLGSAGSLPFLI) traverse the membrane as a helical segment. Positions 98–109 (VTDAFFESFSAL) form an intramembrane region, helical; Pore-forming. An intramembrane segment occupies 110 to 115 (TTTGAT). A selectivity filter part 1 region spans residues 110–115 (TTTGAT). K(+)-binding residues include Thr111 and Thr112. Over 116–124 (VIVGLDELP) the chain is Periplasmic. A helical transmembrane segment spans residues 125–150 (KAILFYRQFLQWFGGMGIIVLAVAIL). Topologically, residues 151–177 (PVLGIGGMQLYRAEIPGPVKDTKMTPR) are cytoplasmic. The chain crosses the membrane as a helical span at residues 178–202 (IAETAKALWYIYLSLTIACAVAFWL). The Periplasmic segment spans residues 203 to 205 (AGM). An intramembrane region is located at residue Thr206. The segment at residues 207–218 (PFDAISHSFSTI) is an intramembrane region (helical; Pore-forming). Residues 219-224 (AIGGFS) lie within the membrane without spanning it. The interval 219–224 (AIGGFS) is selectivity filter part 2. K(+)-binding residues include Ile220 and Gly221. The Periplasmic segment spans residues 225–234 (THDASMGYFD). The segment at residues 235-250 (SYAINLITVVFLLISA) is an intramembrane region (helical). A helical transmembrane segment spans residues 276-296 (FRAFIFIQVLLFLVCFLLLLK). An intramembrane region (helical; Pore-forming) is located at residues 303–318 (PYDAFDQALFQTVSIS). The stretch at 319–324 (TTAGFT) is an intramembrane region. Positions 319–324 (TTAGFT) are selectivity filter part 3. The K(+) site is built by Thr320 and Ala321. Residues 325-332 (TTGFADWP) are Periplasmic-facing. Positions 333-344 (LFLPVLLLFSSF) form an intramembrane region, helical. The segment at residues 345 to 357 (IGGCAGSTGGGMK) is an intramembrane region (note=Loop between two helices). The chain crosses the membrane as a helical span at residues 392 to 419 (PQRVVDAVWGFFSAYALVFVVCMLGLIA). Residues 420–421 (TG) are Periplasmic-facing. Residues 422–423 (MD) lie within the membrane without spanning it. An intramembrane region (helical; Pore-forming) is located at residues 424–434 (ELSAFSAVAAT). Residues 435–441 (LNNLGPG) lie within the membrane without spanning it. The tract at residues 436 to 441 (NNLGPG) is selectivity filter part 4. K(+) is bound by residues Asn437 and Leu438. The Periplasmic portion of the chain corresponds to 442 to 453 (LGEVALHFGDVN). Positions 454-465 (DKAKWVLIVSML) form an intramembrane region, helical.

This sequence belongs to the TrkH potassium transport family. In terms of assembly, homodimer.

The protein resides in the cell inner membrane. Low-affinity potassium transport system. Interacts with trk system potassium uptake protein TrkA and requires TrkE for transport activity. Selective for permeation of potassium ion and rubidium ion over smaller ions such as natrium or litium. This is Trk system potassium uptake protein TrkH from Vibrio parahaemolyticus serotype O3:K6 (strain RIMD 2210633).